A 485-amino-acid chain; its full sequence is Adenylate kinase 8 (485 aa).

Adenylate kinase regions lie at residues 58–258 and 269–472; these read PRVF…TFVL and PRIL…YTVS. Position 67 to 72 (67 to 72) interacts with ATP; sequence ASGKHT. The tract at residues 87–113 is NMP 1; the sequence is TPESVLSSDVSLLAKEAQSYRDKGQEV. Residues 140–143 and Q147 contribute to the AMP site; that span reads GFPK. An LID 1 region spans residues 177–206; sequence GKRIDTANGEVYHTTFDWPSDPTVQRNLVE. Residue R218 participates in AMP binding. ATP is bound at residue 278-283; that stretch reads GSGRSL. The NMP 2 stretch occupies residues 298–327; the sequence is CCGQVLKEAVADQTKLGEVIQPYIENDQQV. AMP contacts are provided by residues 325–327, 354–357, and Q361; these read QQV and GFPR. An LID 2 region spans residues 391–424; the sequence is LCMTDPVSGERYHDIYKPAPSSEVHERLQQNPRH. AMP is bound at residue R432.

Belongs to the adenylate kinase family.

The protein localises to the cytoplasm. It localises to the cytosol. It catalyses the reaction AMP + ATP = 2 ADP. The catalysed reaction is a 2'-deoxyribonucleoside 5'-diphosphate + ATP = a 2'-deoxyribonucleoside 5'-triphosphate + ADP. The enzyme catalyses a ribonucleoside 5'-diphosphate + ATP = a ribonucleoside 5'-triphosphate + ADP. Functionally, nucleoside monophosphate (NMP) kinase that catalyzes the reversible transfer of the terminal phosphate group between nucleoside triphosphates and monophosphates. Has highest activity toward AMP, and weaker activity toward dAMP, CMP and dCMP. Also displays broad nucleoside diphosphate kinase activity. The polypeptide is Adenylate kinase 8 (ak8) (Xenopus tropicalis (Western clawed frog)).